The following is an 843-amino-acid chain: Vacuolar membrane protease (843 aa).

Residues 1 to 16 (MTNSRRHIFERICAKA) are Cytoplasmic-facing. The chain crosses the membrane as a helical span at residues 17–37 (FQSSLTCSIFGFTVLLILYLL). Topologically, residues 38–347 (DWKRIAQVPG…LAFGKYWQLN (310 aa)) are vacuolar. Asn96, Asn109, and Asn117 each carry an N-linked (GlcNAc...) asparagine glycan. The Zn(2+) site is built by His147 and Asp159. Glu191 functions as the Proton acceptor in the catalytic mechanism. Residue Glu192 coordinates Zn(2+). Asn209 is a glycosylation site (N-linked (GlcNAc...) asparagine). A Zn(2+)-binding site is contributed by Glu217. N-linked (GlcNAc...) asparagine glycosylation is present at Asn275. A Zn(2+)-binding site is contributed by His292. N-linked (GlcNAc...) asparagine glycosylation is present at Asn322. A helical transmembrane segment spans residues 348–368 (LPIYQVLNIIFAVICPIVLLL). Residues 369–386 (TLIRFPSLYEQLKKPRYT) are Cytoplasmic-facing. A helical membrane pass occupies residues 387-407 (VCFVVSCIFVSIFDTLTVLLL). Over 408–417 (TWINPYVINS) the chain is Vacuolar. The helical transmembrane segment at 418–438 (HTGLILALFYLTNLIALAFSF) threads the bilayer. Residues 439–456 (RAAATHSKLSSEDLSSIE) lie on the Cytoplasmic side of the membrane. A helical transmembrane segment spans residues 457–477 (IVFIWYAQILWYLVFIVSVIL). Over 478–484 (SIYFQLG) the chain is Vacuolar. The chain crosses the membrane as a helical span at residues 485–505 (STYWVTLSYLCTFTCCIMTII). Topologically, residues 506–566 (RINYFVDNVV…NRAHVKLIDN (61 aa)) are cytoplasmic. Residues 567–587 (IWTVIYFIFNVPFPVFLCYDI) traverse the membrane as a helical segment. Topologically, residues 588–608 (LVETILPAGSQTLTDSVFSSK) are vacuolar. The chain crosses the membrane as a helical span at residues 609 to 629 (LYKLVIFVVFLSLVNSGPFIF). The Cytoplasmic portion of the chain corresponds to 630 to 636 (RALSKKS). The helical transmembrane segment at 637 to 657 (LAVLTMLWITLFVQALSVNPF) threads the bilayer. Topologically, residues 658–843 (TESAPLKLSF…LLKVKSSIVI (186 aa)) are vacuolar. Residues Asn677, Asn703, Asn707, Asn754, and Asn788 are each glycosylated (N-linked (GlcNAc...) asparagine).

This sequence belongs to the peptidase M28 family. Zn(2+) is required as a cofactor.

The protein localises to the membrane. Its subcellular location is the vacuole membrane. In terms of biological role, may be involved in vacuolar sorting and osmoregulation. This Schizosaccharomyces pombe (strain 972 / ATCC 24843) (Fission yeast) protein is Vacuolar membrane protease.